The chain runs to 122 residues: Large ribosomal subunit protein uL14 (122 aa).

The protein belongs to the universal ribosomal protein uL14 family. Part of the 50S ribosomal subunit. Forms a cluster with proteins L3 and L19. In the 70S ribosome, L14 and L19 interact and together make contacts with the 16S rRNA in bridges B5 and B8.

Its function is as follows. Binds to 23S rRNA. Forms part of two intersubunit bridges in the 70S ribosome. This chain is Large ribosomal subunit protein uL14, found in Stenotrophomonas maltophilia (strain R551-3).